The sequence spans 111 residues: MHHTLIVARMAPGAAPDIAKVFAESDSGELPHLVGVNRRSLFEFGDGVYLHLIESDEDPAPTIGRLTGHPEFRQVSERLEPYVSAYDPATWRGPKDAMARCFYRWERTPAG.

This is an uncharacterized protein from Streptomyces coelicolor (strain ATCC BAA-471 / A3(2) / M145).